We begin with the raw amino-acid sequence, 356 residues long: 3-dehydroquinate synthase (356 aa).

NAD(+)-binding positions include 106-110 (GVVGD), 130-131 (TT), lysine 143, and lysine 152. Zn(2+) contacts are provided by glutamate 185, histidine 248, and histidine 265.

This sequence belongs to the sugar phosphate cyclases superfamily. Dehydroquinate synthase family. Co(2+) serves as cofactor. Zn(2+) is required as a cofactor. It depends on NAD(+) as a cofactor.

Its subcellular location is the cytoplasm. It carries out the reaction 7-phospho-2-dehydro-3-deoxy-D-arabino-heptonate = 3-dehydroquinate + phosphate. Its pathway is metabolic intermediate biosynthesis; chorismate biosynthesis; chorismate from D-erythrose 4-phosphate and phosphoenolpyruvate: step 2/7. Its function is as follows. Catalyzes the conversion of 3-deoxy-D-arabino-heptulosonate 7-phosphate (DAHP) to dehydroquinate (DHQ). The sequence is that of 3-dehydroquinate synthase from Thermoanaerobacter pseudethanolicus (strain ATCC 33223 / 39E) (Clostridium thermohydrosulfuricum).